The chain runs to 261 residues: Indole-3-glycerol phosphate synthase (261 aa).

The protein belongs to the TrpC family.

It carries out the reaction 1-(2-carboxyphenylamino)-1-deoxy-D-ribulose 5-phosphate + H(+) = (1S,2R)-1-C-(indol-3-yl)glycerol 3-phosphate + CO2 + H2O. It functions in the pathway amino-acid biosynthesis; L-tryptophan biosynthesis; L-tryptophan from chorismate: step 4/5. This chain is Indole-3-glycerol phosphate synthase, found in Burkholderia ambifaria (strain ATCC BAA-244 / DSM 16087 / CCUG 44356 / LMG 19182 / AMMD) (Burkholderia cepacia (strain AMMD)).